Consider the following 102-residue polypeptide: Small ribosomal subunit protein uS10 (102 aa).

This sequence belongs to the universal ribosomal protein uS10 family. Part of the 30S ribosomal subunit.

Its function is as follows. Involved in the binding of tRNA to the ribosomes. In Staphylococcus aureus (strain Mu3 / ATCC 700698), this protein is Small ribosomal subunit protein uS10.